Reading from the N-terminus, the 853-residue chain is E3 ubiquitin-protein ligase ZNRF3 (853 aa).

An N-terminal signal peptide occupies residues Met1–Ala28. Over Lys29 to Met192 the chain is Extracellular. A helical membrane pass occupies residues Gly193 to Ile213. At Lys214–Asp853 the chain is on the cytoplasmic side. The segment at Cys266–Arg307 adopts an RING-type; atypical zinc-finger fold. Disordered regions lie at residues Ser583–Ser629, Ser650–Glu673, Gly685–Tyr713, and Thr834–Asp853. The span at Thr589–Arg607 shows a compositional bias: gly residues. Positions His615 to Ser629 are enriched in polar residues.

This sequence belongs to the ZNRF3 family.

The protein resides in the cell membrane. The catalysed reaction is S-ubiquitinyl-[E2 ubiquitin-conjugating enzyme]-L-cysteine + [acceptor protein]-L-lysine = [E2 ubiquitin-conjugating enzyme]-L-cysteine + N(6)-ubiquitinyl-[acceptor protein]-L-lysine.. Its pathway is protein modification; protein ubiquitination. Functionally, E3 ubiquitin-protein ligase that acts as a negative regulator of the Wnt signaling pathway by mediating the ubiquitination and subsequent degradation of Wnt receptor complex components. Along with RSPO2 and RNF43, constitutes a master switch that governs limb specification. The polypeptide is E3 ubiquitin-protein ligase ZNRF3 (znrf3) (Xenopus tropicalis (Western clawed frog)).